Consider the following 499-residue polypeptide: Putative antiporter subunit mnhD2 (499 aa).

Helical transmembrane passes span 1–21, 31–51, 77–97, 107–127, 129–149, 160–180, 208–228, 239–259, 272–292, 307–327, 329–349, 367–387, 402–422, and 449–469; these read MSNL…ILVF, ILSI…LIYV, LSLL…AYGF, FHLP…FLTS, LFNL…LVTL, IVYV…IGML, ISLV…FMWL, LAAL…IRFF, TLLV…VIAY, IGFI…GAIF, LAND…LVYM, FFGV…PFSG, GNYI…YSLF, and GLLS…PVVL.

It belongs to the CPA3 antiporters (TC 2.A.63) subunit D family. In terms of assembly, may form a heterooligomeric complex that consists of seven subunits: mnhA2, mnhB2, mnhC2, mnhD2, mnhE2, mnhF2 and mnhG2.

It localises to the cell membrane. The chain is Putative antiporter subunit mnhD2 (mnhD2) from Staphylococcus epidermidis (strain ATCC 35984 / DSM 28319 / BCRC 17069 / CCUG 31568 / BM 3577 / RP62A).